Here is a 517-residue protein sequence, read N- to C-terminus: Sterol 14-alpha demethylase CYP51C (517 aa).

The chain crosses the membrane as a helical span at residues 10-30; the sequence is TLPLSVSIPLTTSIIIILSIV. Residue Y115 coordinates lanosterol. G300 is a binding site for itraconazole. C458 is a heme binding site.

This sequence belongs to the cytochrome P450 family. The cofactor is heme.

The protein resides in the endoplasmic reticulum membrane. It functions in the pathway steroid metabolism; ergosterol biosynthesis. Functionally, together with cyp51A and cyp51B, encodes the sterol 14alpha-demethylase that plays a critical role in the third module of ergosterol biosynthesis pathway, being ergosterol the major sterol component in fungal membranes that participates in a variety of functions. Cyp51C does not seem to encode an active sterol 14-alpha-demethylase, but can impact indirectly on sterol 14alpha-demethylation, and is required for full virulence on host wheat ears, but not on Arabidopsis floral tissue or the fruits of apple and tomato. The third module or late pathway involves the ergosterol synthesis itself through consecutive reactions that mainly occur in the endoplasmic reticulum (ER) membrane. In filamentous fungi, during the initial step of this module, lanosterol (lanosta-8,24-dien-3beta-ol) can be metabolized to eburicol. Sterol 14alpha-demethylase catalyzes the three-step oxidative removal of the 14alpha-methyl group (C-32) of both these sterols in the form of formate, and converts eburicol and lanosterol to 14-demethyleburicol (4,4,24-trimethylergosta-8,14,24(28)-trienol) and 4,4-dimethyl-5alpha-cholesta-8,14,24-trien-3beta-ol, respectively, which are further metabolized by other enzymes in the pathway to ergosterol. The chain is Sterol 14-alpha demethylase CYP51C from Gibberella zeae (strain ATCC MYA-4620 / CBS 123657 / FGSC 9075 / NRRL 31084 / PH-1) (Wheat head blight fungus).